The following is a 321-amino-acid chain: Malate dehydrogenase (321 aa).

NAD(+) contacts are provided by residues 13 to 18 (GAGNIG) and D38. Substrate-binding residues include R87 and R93. NAD(+)-binding positions include N100 and 123–125 (VTN). N125 and R156 together coordinate substrate. The Proton acceptor role is filled by H180.

The protein belongs to the LDH/MDH superfamily. MDH type 3 family.

The enzyme catalyses (S)-malate + NAD(+) = oxaloacetate + NADH + H(+). In terms of biological role, catalyzes the reversible oxidation of malate to oxaloacetate. The polypeptide is Malate dehydrogenase (Anaplasma phagocytophilum (strain HZ)).